A 415-amino-acid polypeptide reads, in one-letter code: Squalene synthase clz20 (415 aa).

The N-linked (GlcNAc...) asparagine glycan is linked to Asn-114. Residues 395–415 (ADTMYLAVLVLGVFGVVAAIL) form a helical membrane-spanning segment.

The protein belongs to the phytoene/squalene synthase family. Requires Mg(2+) as cofactor.

It localises to the membrane. The enzyme catalyses 2 (2E,6E)-farnesyl diphosphate + NADH + H(+) = squalene + 2 diphosphate + NAD(+). It carries out the reaction 2 (2E,6E)-farnesyl diphosphate + NADPH + H(+) = squalene + 2 diphosphate + NADP(+). The protein operates within terpene metabolism; lanosterol biosynthesis; lanosterol from farnesyl diphosphate: step 1/3. Squalene synthase; part of the gene cluster that mediates the biosynthesis of squalestatin S1 (SQS1, also known as zaragozic acid A), a heavily oxidized fungal polyketide that offers potent cholesterol lowering activity by targeting squalene synthase (SS). Catalyzes the condensation of 2 two farnesyl pyrophosphate moieties to form squalene. The presence of a gene encoding a squalene synthase supports the identification of the cluster as being responsible for SQS1 production and suggests a likely mechanism for self-resistance. This chain is Squalene synthase clz20, found in Cochliobolus lunatus (Filamentous fungus).